A 1334-amino-acid chain; its full sequence is Putative transmembrane protein ORF1334 (1334 aa).

The helical transmembrane segment at 53 to 73 (VSIVVLVLTLFIIPVIIPPAH) threads the bilayer. The tract at residues 1107–1135 (LSASTTPPSSTTPTPPSSSSSSSSSSSIS) is disordered. The segment covering 1110–1135 (STTPPSSTTPTPPSSSSSSSSSSSIS) has biased composition (low complexity). Transmembrane regions (helical) follow at residues 1256-1276 (AVLPPIYALPLFLLFAGSFFI), 1292-1312 (IIYIFFVAPFLIVIGIPTSVV), and 1313-1333 (YGTVVGALIIIIIGLWASRSQ).

Its subcellular location is the host membrane. The polypeptide is Putative transmembrane protein ORF1334 (Acidianus two-tailed virus (ATV)).